The following is a 218-amino-acid chain: MLEAKNLTCIRDDRCLFQQLSFCIAPGEIVQIEGPNGAGKTSLLRILAGLAEADEGQVNWRDNNIRRDRAKYHQDLLFLGHQPGIKSVLTPFENLLFYQSVFQKVDSAAIWQALAQVGLVGYEDLPVSQLSAGQQRRVALARLWLSPAPLWILDEPLTAIDKQGVSTLLALFVQHAAKGGMVLLTTHQDLGAVSHNVRKICLANTQEKSCLSACCAVN.

Positions leucine 2 to valine 217 constitute an ABC transporter domain. Residue glycine 34–threonine 41 coordinates ATP.

It belongs to the ABC transporter superfamily. CcmA exporter (TC 3.A.1.107) family. In terms of assembly, the complex is composed of two ATP-binding proteins (CcmA) and two transmembrane proteins (CcmB).

The protein localises to the cell inner membrane. It carries out the reaction heme b(in) + ATP + H2O = heme b(out) + ADP + phosphate + H(+). Part of the ABC transporter complex CcmAB involved in the biogenesis of c-type cytochromes; once thought to export heme, this seems not to be the case, but its exact role is uncertain. Responsible for energy coupling to the transport system. The sequence is that of Cytochrome c biogenesis ATP-binding export protein CcmA from Yersinia pseudotuberculosis serotype I (strain IP32953).